Reading from the N-terminus, the 447-residue chain is Elongation factor 1-alpha (447 aa).

Positions 5–230 (KIHISIVVIG…DQINEPKRPS (226 aa)) constitute a tr-type G domain. The interval 14–21 (GHVDSGKS) is G1. 14 to 21 (GHVDSGKS) contributes to the GTP binding site. Lys55 carries the post-translational modification N6,N6-dimethyllysine. Residues 70-74 (GITID) are G2. Lys79 is subject to N6,N6,N6-trimethyllysine. The G3 stretch occupies residues 91-94 (DAPG). GTP contacts are provided by residues 91-95 (DAPGH) and 153-156 (NKMD). Positions 153-156 (NKMD) are G4. Lys187 is modified (N6,N6,N6-trimethyllysine). Residues 194–196 (SGF) are G5. Residue Lys261 is modified to N6-methyllysine. At Glu289 the chain carries 5-glutamyl glycerylphosphorylethanolamine. N6,N6,N6-trimethyllysine is present on Lys306. The residue at position 362 (Glu362) is a 5-glutamyl glycerylphosphorylethanolamine. An N6,N6,N6-trimethyllysine modification is found at Lys396.

This sequence belongs to the TRAFAC class translation factor GTPase superfamily. Classic translation factor GTPase family. EF-Tu/EF-1A subfamily.

It localises to the cytoplasm. Functionally, this protein promotes the GTP-dependent binding of aminoacyl-tRNA to the A-site of ribosomes during protein biosynthesis. The protein is Elongation factor 1-alpha (BLT63) of Hordeum vulgare (Barley).